A 294-amino-acid polypeptide reads, in one-letter code: G-protein coupled receptor homolog U51 (294 aa).

The Extracellular segment spans residues 1 to 14 (MKNIDLTNWKLLAE). The helical transmembrane segment at 15 to 35 (IYEYLFFFSFFFLCLLVIIVV) threads the bilayer. Residues 36–47 (KFNNSTVGREYT) lie on the Cytoplasmic side of the membrane. A helical transmembrane segment spans residues 48–68 (FSTFSGMLVYILLLPVKMGML). Topologically, residues 69–79 (TKMWDVSTDYC) are extracellular. Residues 80 to 102 (IILMFLSDFSFIFSSWALTLLAL) form a helical membrane-spanning segment. The Cytoplasmic segment spans residues 103 to 119 (ERINNFSFSEIKVNETK). The helical transmembrane segment at 120-140 (ILKQMSFPIIWVTSIFQAVQI) threads the bilayer. At 141 to 166 (SMKYKKSQMNLEDDYCLLAIERSAEE) the chain is on the extracellular side. A helical membrane pass occupies residues 167-187 (AWILLMYTVVIPTFIVFFYVL). Topologically, residues 188 to 200 (NKRFLFLERDLNS) are cytoplasmic. The chain crosses the membrane as a helical span at residues 201-221 (IVTHLSLFLFFGALCFFPASV). The Extracellular segment spans residues 222–236 (LNEFNCNRLFYGLHE). Residues 237–257 (LLIVCLELKIFYVPTMTYIIS) traverse the membrane as a helical segment. Residues 258–294 (CENYRLAAKAFFCKCFKPCFLMPSLRKLQQPTKSTQF) are Cytoplasmic-facing.

The protein belongs to the G-protein coupled receptor 1 family.

Its subcellular location is the host cell membrane. This Human herpesvirus 7 (strain JI) (HHV-7) protein is G-protein coupled receptor homolog U51 (U51).